Reading from the N-terminus, the 364-residue chain is DNA polymerase IV (364 aa).

The region spanning 14-198 (IIHIDMDAFF…LPIEKFHGVG (185 aa)) is the UmuC domain. 2 residues coordinate Mg(2+): aspartate 18 and aspartate 116. Glutamate 117 is a catalytic residue.

It belongs to the DNA polymerase type-Y family. As to quaternary structure, monomer. It depends on Mg(2+) as a cofactor.

The protein localises to the cytoplasm. It catalyses the reaction DNA(n) + a 2'-deoxyribonucleoside 5'-triphosphate = DNA(n+1) + diphosphate. Functionally, poorly processive, error-prone DNA polymerase involved in untargeted mutagenesis. Copies undamaged DNA at stalled replication forks, which arise in vivo from mismatched or misaligned primer ends. These misaligned primers can be extended by PolIV. Exhibits no 3'-5' exonuclease (proofreading) activity. May be involved in translesional synthesis, in conjunction with the beta clamp from PolIII. In Streptococcus pyogenes serotype M12 (strain MGAS2096), this protein is DNA polymerase IV.